A 289-amino-acid polypeptide reads, in one-letter code: Small ribosomal subunit protein uS2C (289 aa).

It belongs to the universal ribosomal protein uS2 family. Component of the small ribosomal subunit. Mature ribosomes consist of a small (40S) and a large (60S) subunit. The 40S subunit contains about 33 different proteins and 1 molecule of RNA (18S). The 60S subunit contains about 49 different proteins and 3 molecules of RNA (25S, 5.8S and 5S). Interacts with rps21.

It is found in the cytoplasm. In terms of biological role, required for the assembly and/or stability of the 40S ribosomal subunit. Required for the processing of the 20S rRNA-precursor to mature 18S rRNA in a late step of the maturation of 40S ribosomal subunits. The polypeptide is Small ribosomal subunit protein uS2C (rps0c) (Schizosaccharomyces japonicus (strain yFS275 / FY16936) (Fission yeast)).